Here is a 150-residue protein sequence, read N- to C-terminus: Large ribosomal subunit protein uL13 (150 aa).

Belongs to the universal ribosomal protein uL13 family. Part of the 50S ribosomal subunit.

In terms of biological role, this protein is one of the early assembly proteins of the 50S ribosomal subunit, although it is not seen to bind rRNA by itself. It is important during the early stages of 50S assembly. This is Large ribosomal subunit protein uL13 from Persephonella marina (strain DSM 14350 / EX-H1).